A 136-amino-acid chain; its full sequence is Ig heavy chain V-A2 region P-MU-3 (136 aa).

Positions 1–19 (METGLRWLLLVAVLKGVQC) are cleaved as a signal peptide. Residue Gln-20 is modified to Pyrrolidone carboxylic acid. The Ig-like domain occupies 20 to 127 (QSVKESEGGL…ENEFFNAIWG (108 aa)).

In Oryctolagus cuniculus (Rabbit), this protein is Ig heavy chain V-A2 region P-MU-3.